Reading from the N-terminus, the 352-residue chain is Endoplasmic reticulum GDP-fucose transporter (352 aa).

10 helical membrane-spanning segments follow: residues 9 to 29 (LGMLFVFIGCCSNVVFLELII), 34 to 54 (GAGNLITFAQFLFIALEGLVF), 70 to 90 (YVILVALFFGANVCNNYAFNF), 96 to 116 (LHMIFRSGSLMANMIMGIVLL), 126 to 146 (SSVAMITAGIILCTLVSSGDV), 163 to 183 (FFWWTVGIGLLTIALLVTAYM), 201 to 221 (ALFFTHMLPLPGFLIMAGNIV), 249 to 271 (LMLFYLLCNVVTQYVCISAVYVL), 276 to 298 (ASLTVTLVVTLRKFVSLLFSIIY), and 305 to 325 (LNHWVGTILVFFGTILFANVI). Positions 350 to 352 (KVE) match the Prevents secretion from ER motif.

The protein belongs to the nucleotide-sugar transporter family. SLC35B subfamily.

It is found in the endoplasmic reticulum membrane. Sugar transporter that specifically mediates the transport of UDP-N-acetylglucosamine (UDP-GlcNAc), GDP-fucose and UDP-xylose. Functions redundantly with Gfr in the O-fucosylation of Notch, positively regulating Notch signaling. Involved in the biosynthesis of heparan sulfate-glycosaminoglycan (HS-GAG) and in Dpp signaling in the wing imaginal disk. The polypeptide is Endoplasmic reticulum GDP-fucose transporter (Drosophila melanogaster (Fruit fly)).